A 727-amino-acid chain; its full sequence is Phenylalanine ammonia-lyase str11 (727 aa).

The Proton donor/acceptor role is filled by Tyr-105. Positions 210–212 form a cross-link, 5-imidazolinone (Ala-Gly); that stretch reads ASG. Ser-211 carries the post-translational modification 2,3-didehydroalanine (Ser). The (E)-cinnamate site is built by Asn-271, Gln-361, Arg-367, Asn-397, Lys-468, Glu-496, and Asn-499.

The protein belongs to the PAL/histidase family. Post-translationally, contains an active site 4-methylidene-imidazol-5-one (MIO), which is formed autocatalytically by cyclization and dehydration of residues Ala-Ser-Gly.

The catalysed reaction is L-phenylalanine = (E)-cinnamate + NH4(+). Its pathway is mycotoxin biosynthesis. In terms of biological role, phenylalanine ammonia-lyase; part of the gene cluster that mediates the biosynthesis of strobilurin A, an antifungal polyketide that contains a key beta-methoxyacrylate toxophore that targets the complex III of the mitochondrial electron transport chain. Strobilurin biosynthesis begins with construction of benzoyl CoA by step-wise elimination of ammonia from phenylalanine by the phenylalanine ammonia-lyase str11, oxygenation by str8 and retro-Claisen reaction to form benzoic acid, which is activated to its CoA thiolester benzoyl CoA by the dedicated CoA ligase str10. Benzoyl CoA forms the starter unit for the highly reducing polyketide synthase stpks1 that produces the polyketide prestrobilutin A. The FAD-dependent oxygenase str9 then catalyzes the key oxidative rearrangement responsible for the creation of the beta-methoxyacrylate toxophore. Str9 performs epoxidation of the 2,3 olefin of prestrobilutin A, followed by Meinwald rearrangement to furnish the aldehyde intermediate. Rapid enolization of the aldehyde intermediate would give the beta-methoxyacrylate skeleton and methylations catalyzed by str2 and str3 complete the synthesis and lead to the production of strobilurin A. The short-chain dehydrogenase stl2 and the dehydrogenase str4 play a role in the shunt pathway leading to the production of bolineol. The cluster encodes no obvious halogenase gene that could be involved in production of strobilurin B, nor any obvious dimethylallyl-transferase that could be involved in the production of strobilurin G. It is possible that unknown proteins encoded in, or near, the cluster (such as str1 or stl1) may form new classes of halogenases or dimethylally-transferases, or that the responsible genes are located elsewhere on the genome. Similarly, proteins encoded by str5/str6 hydrolases appear to have no chemical role in the biosynthesis of strobilurin A. Finally, no obvious self-resistance gene is found within the cluster. This Strobilurus tenacellus protein is Phenylalanine ammonia-lyase str11.